We begin with the raw amino-acid sequence, 180 residues long: MQITVSGLPGSGTSTLSKLLAECYDLELISSGEIFRRMARERGMSLAEFGALAERDPSIDLDIDKNQKAIIHSRENIILESRLAGHMAQGRSDVIKIWIKAPLLTRVKRIQRREKTISFDEELKKTVERERSETLRYKNYYGIDITDLSIYDIVIDSEKWNQYQTLDILRVAIDALVGPE.

Residue 7 to 15 (GLPGSGTST) participates in ATP binding.

This sequence belongs to the cytidylate kinase family. Type 2 subfamily.

The protein localises to the cytoplasm. It carries out the reaction CMP + ATP = CDP + ADP. The catalysed reaction is dCMP + ATP = dCDP + ADP. The chain is Cytidylate kinase (cmk) from Methanosarcina mazei (strain ATCC BAA-159 / DSM 3647 / Goe1 / Go1 / JCM 11833 / OCM 88) (Methanosarcina frisia).